Consider the following 1461-residue polypeptide: Formin-3 (1461 aa).

Disordered regions lie at residues 1–67 (MASK…SDDN) and 431–457 (YREESHTPHGNTTRKTSTPVSNNRPTT). Over residues 12–28 (TSRSIQSRNSSYSTSSN) the composition is skewed to low complexity. Polar residues-rich tracts occupy residues 29–53 (ERIGTPSTISLSENSDLSKLQSTND) and 438–457 (PHGNTTRKTSTPVSNNRPTT). The 417-residue stretch at 92–508 (SETEQLRKIY…KIQKSMQLLT (417 aa)) folds into the GBD/FH3 domain. Residues 137-515 (QHTVLDEATY…LLTHTLEALE (379 aa)) form an interaction with tea4 region. The stretch at 540–639 (GTAEEIAEYK…VQNSNEQHLQ (100 aa)) forms a coiled coil. The interval 683 to 811 (GIPVRVHTPS…EPKIDETSLT (129 aa)) is disordered. Residues 700-718 (SFSGSEISSSPSPLLPDVS) show a composition bias toward low complexity. Positions 731 to 784 (SPPPPPPAVIVPTPAPAPIPVPPPAPIMGGPPPPPPPPGVAGAGPPPPPPPPPA) are enriched in pro residues. Basic and acidic residues predominate over residues 801 to 811 (PEPKIDETSLT). One can recognise an FH2 domain in the interval 845-1257 (LRDLHKPTRP…RIMSEDRDKL (413 aa)). Disordered stretches follow at residues 1268-1337 (AKYR…AEEK) and 1416-1461 (ERLQ…RQKQ). 2 stretches are compositionally biased toward basic and acidic residues: residues 1273–1315 (KREL…KTGD) and 1325–1337 (MEDLEKPDYAEEK). Positions 1445–1454 (TNGSNASNLV) are enriched in polar residues.

It belongs to the formin homology family. In terms of assembly, interacts with rax2, rho3 and tea4. Interacts with tea1 in the presence of tea4.

The protein localises to the cytoplasm. Its subcellular location is the cell cortex. It localises to the cell tip. Involved in controlling polarized cell growth. Required for interphase actin cable formation and microtubule organization. This chain is Formin-3 (for3), found in Schizosaccharomyces pombe (strain 972 / ATCC 24843) (Fission yeast).